The sequence spans 155 residues: Ribosome maturation factor RimP (155 aa).

Belongs to the RimP family.

It is found in the cytoplasm. Its function is as follows. Required for maturation of 30S ribosomal subunits. The chain is Ribosome maturation factor RimP from Synechococcus sp. (strain WH7803).